The primary structure comprises 182 residues: Isopentenyl-diphosphate Delta-isomerase (182 aa).

Mn(2+) contacts are provided by His25 and His32. The Nudix hydrolase domain maps to 30–164 (LLHLAFSSWL…PWAFSPWMVM (135 aa)). Cys67 is a catalytic residue. His69 contributes to the Mn(2+) binding site. Residue Glu87 coordinates Mg(2+). Glu114 and Glu116 together coordinate Mn(2+). Residue Glu116 is part of the active site.

The protein belongs to the IPP isomerase type 1 family. In terms of assembly, homodimer. The cofactor is Mg(2+). Requires Mn(2+) as cofactor.

The protein localises to the cytoplasm. The catalysed reaction is isopentenyl diphosphate = dimethylallyl diphosphate. It participates in isoprenoid biosynthesis; dimethylallyl diphosphate biosynthesis; dimethylallyl diphosphate from isopentenyl diphosphate: step 1/1. In terms of biological role, catalyzes the 1,3-allylic rearrangement of the homoallylic substrate isopentenyl (IPP) to its highly electrophilic allylic isomer, dimethylallyl diphosphate (DMAPP). The protein is Isopentenyl-diphosphate Delta-isomerase of Escherichia coli (strain ATCC 8739 / DSM 1576 / NBRC 3972 / NCIMB 8545 / WDCM 00012 / Crooks).